Here is a 183-residue protein sequence, read N- to C-terminus: Adenine phosphoribosyltransferase 3 (183 aa).

This sequence belongs to the purine/pyrimidine phosphoribosyltransferase family. Homodimer.

The protein resides in the cytoplasm. It catalyses the reaction AMP + diphosphate = 5-phospho-alpha-D-ribose 1-diphosphate + adenine. The protein operates within purine metabolism; AMP biosynthesis via salvage pathway; AMP from adenine: step 1/1. Functionally, catalyzes a salvage reaction resulting in the formation of AMP, that is energically less costly than de novo synthesis. May contribute to the recycling of adenine into adenylate nucleotides and the inactivation of cytokinins by phosphoribosylation. Possesses low activity toward adenine and cytokinins. The chain is Adenine phosphoribosyltransferase 3 (APT3) from Arabidopsis thaliana (Mouse-ear cress).